Consider the following 258-residue polypeptide: Small ribosomal subunit protein eS1 (258 aa).

Positions 235 to 258 (VASSGDAGSAVRRDGYEPPVQESV) are disordered.

The protein belongs to the eukaryotic ribosomal protein eS1 family. As to quaternary structure, component of the small ribosomal subunit. Mature ribosomes consist of a small (40S) and a large (60S) subunit. The 40S subunit contains about 33 different proteins and 1 molecule of RNA (18S). The 60S subunit contains about 49 different proteins and 3 molecules of RNA (28S, 5.8S and 5S).

The protein resides in the cytoplasm. The chain is Small ribosomal subunit protein eS1 from Trichoplax adhaerens (Trichoplax reptans).